A 145-amino-acid polypeptide reads, in one-letter code: Large ribosomal subunit protein uL11 (145 aa).

It belongs to the universal ribosomal protein uL11 family. In terms of assembly, part of the ribosomal stalk of the 50S ribosomal subunit. Interacts with L10 and the large rRNA to form the base of the stalk. L10 forms an elongated spine to which L12 dimers bind in a sequential fashion forming a multimeric L10(L12)X complex. In terms of processing, one or more lysine residues are methylated.

Forms part of the ribosomal stalk which helps the ribosome interact with GTP-bound translation factors. This Rickettsia africae (strain ESF-5) protein is Large ribosomal subunit protein uL11.